The sequence spans 318 residues: MKIKQAIDKIPGGLMLVPLFLGALCNTFTPGAGKYLGSFSNGLITGTIPILAVWFFCMGASIEFKATGTMLRKSGVLVVTKIATAWVVALIAGTFLPGDGIQNGMLAGISVLALVAAMDMTNGGLYAALMNQYGSKEEAGAFVLMSLESGPLMTMVILGASGIATFEPQLFVGAVLPFLIGFALGNLDPDLRKLFGNSVQTLIPFFAFALGNTINLSVILQTGFAGIFLGLLVIVVTGIPLILADKFIGGGNGTAGVAASSSAGAAVATPLLIANMAPEFAPVAQQATALVATSVIVTSVLVPIITALWAKRFSPKHA.

10 helical membrane passes run 10–30, 42–62, 76–96, 105–125, 139–159, 163–183, 199–219, 224–244, 263–283, and 289–309; these read IPGG…TFTP, GLIT…GASI, VLVV…GTFL, MLAG…NGGL, AGAF…VILG, IATF…IGFA, VQTL…LSVI, FAGI…LILA, AGAA…FAPV, and ALVA…TALW.

It belongs to the KdgT transporter family.

It localises to the cell inner membrane. It carries out the reaction 2-dehydro-3-deoxy-D-gluconate(in) + H(+)(in) = 2-dehydro-3-deoxy-D-gluconate(out) + H(+)(out). Its function is as follows. Catalyzes the proton-dependent uptake of 2-keto-3-deoxygluconate (KDG) into the cell. The polypeptide is 2-keto-3-deoxygluconate permease (Pectobacterium carotovorum subsp. carotovorum (Erwinia carotovora subsp. carotovora)).